Consider the following 181-residue polypeptide: Ras-like protein 1 (181 aa).

10–17 contributes to the GTP binding site; it reads GAGGVGKS. An Effector region motif is present at residues 32-40; that stretch reads YDPTIEDSY. Residues 57–61 and 116–119 each bind GTP; these read DTAGQ and NKCD. A Cysteine methyl ester modification is found at C178. Residue C178 is the site of S-geranylgeranyl cysteine attachment. The propeptide at 179–181 is removed in mature form; the sequence is KML.

Belongs to the small GTPase superfamily. Ras family.

The protein resides in the cell membrane. The enzyme catalyses GTP + H2O = GDP + phosphate + H(+). With respect to regulation, alternates between an inactive form bound to GDP and an active form bound to GTP. Activated by a guanine nucleotide-exchange factor (GEF) and inactivated by a GTPase-activating protein (GAP). Ras proteins bind GDP/GTP and possess intrinsic GTPase activity. Plays a role in eye development by regulating cell growth, survival of postmitotic ommatidial cells and differentiation of photoreceptor cells. During larval development, mediates Ptth/tor signaling leading to the production of ecdysone, a hormone required for the initiation of metamorphosis. The chain is Ras-like protein 1 from Drosophila mojavensis (Fruit fly).